Reading from the N-terminus, the 318-residue chain is Ribonuclease Z (318 aa).

The Zn(2+) site is built by His-62, His-64, Asp-66, His-67, His-139, Asp-210, and His-268. Asp-66 (proton acceptor) is an active-site residue.

Belongs to the RNase Z family. In terms of assembly, homodimer. It depends on Zn(2+) as a cofactor.

The catalysed reaction is Endonucleolytic cleavage of RNA, removing extra 3' nucleotides from tRNA precursor, generating 3' termini of tRNAs. A 3'-hydroxy group is left at the tRNA terminus and a 5'-phosphoryl group is left at the trailer molecule.. Functionally, zinc phosphodiesterase, which displays some tRNA 3'-processing endonuclease activity. Probably involved in tRNA maturation, by removing a 3'-trailer from precursor tRNA. The polypeptide is Ribonuclease Z (Microcystis aeruginosa (strain NIES-843 / IAM M-2473)).